We begin with the raw amino-acid sequence, 232 residues long: uncharacterized protein (232 aa).

Positions E89–D140 form a coiled coil.

This is an uncharacterized protein from Mycobacterium leprae (strain TN).